A 1391-amino-acid polypeptide reads, in one-letter code: DNA-directed RNA polymerase subunit beta'' (1391 aa).

Positions 220, 291, 298, and 301 each coordinate Zn(2+).

The protein belongs to the RNA polymerase beta' chain family. RpoC2 subfamily. In plastids the minimal PEP RNA polymerase catalytic core is composed of four subunits: alpha, beta, beta', and beta''. When a (nuclear-encoded) sigma factor is associated with the core the holoenzyme is formed, which can initiate transcription. Zn(2+) serves as cofactor.

The protein localises to the plastid. The protein resides in the chloroplast. The enzyme catalyses RNA(n) + a ribonucleoside 5'-triphosphate = RNA(n+1) + diphosphate. Its function is as follows. DNA-dependent RNA polymerase catalyzes the transcription of DNA into RNA using the four ribonucleoside triphosphates as substrates. The chain is DNA-directed RNA polymerase subunit beta'' from Gossypium barbadense (Sea Island cotton).